The following is a 122-amino-acid chain: Small ribosomal subunit protein bS6 (122 aa).

The protein belongs to the bacterial ribosomal protein bS6 family.

Its function is as follows. Binds together with bS18 to 16S ribosomal RNA. This Trichlorobacter lovleyi (strain ATCC BAA-1151 / DSM 17278 / SZ) (Geobacter lovleyi) protein is Small ribosomal subunit protein bS6.